We begin with the raw amino-acid sequence, 396 residues long: Acetylornithine aminotransferase 2 (396 aa).

Residues 102-103 (GA) and phenylalanine 134 contribute to the pyridoxal 5'-phosphate site. Arginine 137 serves as a coordination point for N(2)-acetyl-L-ornithine. Residue 219–222 (DEVQ) coordinates pyridoxal 5'-phosphate. Position 248 is an N6-(pyridoxal phosphate)lysine (lysine 248). Residue threonine 276 participates in pyridoxal 5'-phosphate binding.

Belongs to the class-III pyridoxal-phosphate-dependent aminotransferase family. ArgD subfamily. In terms of assembly, homodimer. The cofactor is pyridoxal 5'-phosphate.

It is found in the cytoplasm. The enzyme catalyses N(2)-acetyl-L-ornithine + 2-oxoglutarate = N-acetyl-L-glutamate 5-semialdehyde + L-glutamate. Its pathway is amino-acid biosynthesis; L-arginine biosynthesis; N(2)-acetyl-L-ornithine from L-glutamate: step 4/4. The polypeptide is Acetylornithine aminotransferase 2 (Bordetella pertussis (strain Tohama I / ATCC BAA-589 / NCTC 13251)).